The following is a 632-amino-acid chain: 1-deoxy-D-xylulose-5-phosphate synthase (632 aa).

Thiamine diphosphate-binding positions include His87 and 128–130 (GHS). Asp159 contributes to the Mg(2+) binding site. Residues 160–161 (GA), Asn188, Phe295, and Glu378 contribute to the thiamine diphosphate site. Mg(2+) is bound at residue Asn188.

The protein belongs to the transketolase family. DXPS subfamily. Homodimer. Requires Mg(2+) as cofactor. Thiamine diphosphate is required as a cofactor.

It carries out the reaction D-glyceraldehyde 3-phosphate + pyruvate + H(+) = 1-deoxy-D-xylulose 5-phosphate + CO2. It functions in the pathway metabolic intermediate biosynthesis; 1-deoxy-D-xylulose 5-phosphate biosynthesis; 1-deoxy-D-xylulose 5-phosphate from D-glyceraldehyde 3-phosphate and pyruvate: step 1/1. Catalyzes the acyloin condensation reaction between C atoms 2 and 3 of pyruvate and glyceraldehyde 3-phosphate to yield 1-deoxy-D-xylulose-5-phosphate (DXP). This Pseudomonas fluorescens (strain SBW25) protein is 1-deoxy-D-xylulose-5-phosphate synthase.